The sequence spans 236 residues: 2,3,4,5-tetrahydropyridine-2,6-dicarboxylate N-acetyltransferase (236 aa).

Belongs to the transferase hexapeptide repeat family. DapH subfamily.

It carries out the reaction (S)-2,3,4,5-tetrahydrodipicolinate + acetyl-CoA + H2O = L-2-acetamido-6-oxoheptanedioate + CoA. The protein operates within amino-acid biosynthesis; L-lysine biosynthesis via DAP pathway; LL-2,6-diaminopimelate from (S)-tetrahydrodipicolinate (acetylase route): step 1/3. In terms of biological role, catalyzes the transfer of an acetyl group from acetyl-CoA to tetrahydrodipicolinate. This Listeria ivanovii protein is 2,3,4,5-tetrahydropyridine-2,6-dicarboxylate N-acetyltransferase.